The primary structure comprises 89 residues: Small ribosomal subunit protein uS19 (89 aa).

The protein belongs to the universal ribosomal protein uS19 family.

Functionally, protein S19 forms a complex with S13 that binds strongly to the 16S ribosomal RNA. This chain is Small ribosomal subunit protein uS19, found in Parabacteroides distasonis (strain ATCC 8503 / DSM 20701 / CIP 104284 / JCM 5825 / NCTC 11152).